We begin with the raw amino-acid sequence, 347 residues long: tRNA pseudouridine synthase D (347 aa).

Aspartate 81 functions as the Nucleophile in the catalytic mechanism. A TRUD domain is found at 158–305; sequence GVPNYFGSQR…RHDRRDIALK (148 aa).

The protein belongs to the pseudouridine synthase TruD family.

The catalysed reaction is uridine(13) in tRNA = pseudouridine(13) in tRNA. Its function is as follows. Responsible for synthesis of pseudouridine from uracil-13 in transfer RNAs. The chain is tRNA pseudouridine synthase D from Vibrio campbellii (strain ATCC BAA-1116).